The following is a 556-amino-acid chain: Pumilio homolog 11 (556 aa).

The PUM-HD domain occupies 215–556 (GGSRELDGSA…RIFSKNLWKK (342 aa)). 8 Pumilio repeats span residues 238-276 (SMVDSYGSVYLMAKDQLGCRLLQKFVDEGNFVDVMIIFK), 277-313 (EVINNVIELGTDPFGNYLIQKLIEVCNEEQRTQILIR), 316-351 (SKPGLLVKISINNYGTRVVQKLIETVTTKEQISLVK), 353-388 (ALVPGFLSLFRELNGNHVILNCLKFFSPNDNKFILE), 389-424 (AATKFCIEIATTRHGCCVLQRCVSYSVGEQHEKLVD), 425-459 (EISRNSLLLAQDPFGNYLVQYIIEKKVGGVNVLFE), 460-495 (LRGNYVKLATQKFGSHVVEKCLRYYPESRSQIVNEL), and 496-531 (VSVLNFGYLLQDPYANYVIQCALSKTKGFVRASLVE).

The protein resides in the cytoplasm. Sequence-specific RNA-binding protein that regulates translation and mRNA stability by binding the 3'-UTR of target mRNAs. The polypeptide is Pumilio homolog 11 (APUM11) (Arabidopsis thaliana (Mouse-ear cress)).